The primary structure comprises 124 residues: Sulfiredoxin (124 aa).

It belongs to the sulfiredoxin family. As to quaternary structure, interacts with tpx1 in response to oxidative stress.

It localises to the cytoplasm. It is found in the nucleus. The enzyme catalyses S-hydroxy-S-oxy-L-cysteinyl-[peroxiredoxin] + [protein]-dithiol + ATP = S-hydroxy-L-cysteinyl-[peroxiredoxin] + [protein]-disulfide + ADP + phosphate. Contributes to oxidative stress resistance by reducing cysteine-sulfinic acid formed under exposure to oxidants in a peroxiredoxin. May catalyze the reduction in a multi-step process by acting both as a specific phosphotransferase and a thioltransferase. The sequence is that of Sulfiredoxin (srx1) from Schizosaccharomyces pombe (strain 972 / ATCC 24843) (Fission yeast).